Here is a 194-residue protein sequence, read N- to C-terminus: Adenylate kinase (194 aa).

Residue Gly12 to Thr17 coordinates ATP. Residues Ser34–Val63 are NMP. AMP-binding positions include Thr35, Arg40, Gln61–Val63, Gly88–Arg91, and Gln95. Residues Gly130–Asp136 form an LID region. Residue Arg131 coordinates ATP. AMP-binding residues include Arg133 and Arg145. ATP is bound at residue Arg173.

This sequence belongs to the adenylate kinase family. As to quaternary structure, monomer.

It is found in the cytoplasm. It catalyses the reaction AMP + ATP = 2 ADP. It functions in the pathway purine metabolism; AMP biosynthesis via salvage pathway; AMP from ADP: step 1/1. Its function is as follows. Catalyzes the reversible transfer of the terminal phosphate group between ATP and AMP. Plays an important role in cellular energy homeostasis and in adenine nucleotide metabolism. The chain is Adenylate kinase from Nitratiruptor sp. (strain SB155-2).